The chain runs to 547 residues: CTP synthase (547 aa).

Positions 1 to 265 (MARYVFITGG…DQAVLDAFGI (265 aa)) are amidoligase domain. Residue Ser-13 participates in CTP binding. Residue Ser-13 participates in UTP binding. ATP is bound by residues 14–19 (SLGKGL) and Asp-71. The Mg(2+) site is built by Asp-71 and Glu-139. Residues 146-148 (DIE), 186-191 (KTKPTQ), and Lys-222 each bind CTP. UTP is bound by residues 186–191 (KTKPTQ) and Lys-222. Residues 291–546 (RVAIVGKYTQ…VRAAVEVSRL (256 aa)) form the Glutamine amidotransferase type-1 domain. An L-glutamine-binding site is contributed by Gly-353. Cys-380 serves as the catalytic Nucleophile; for glutamine hydrolysis. L-glutamine is bound by residues 381–384 (LGMQ), Glu-404, and Arg-474. Catalysis depends on residues His-519 and Glu-521.

It belongs to the CTP synthase family. As to quaternary structure, homotetramer.

It catalyses the reaction UTP + L-glutamine + ATP + H2O = CTP + L-glutamate + ADP + phosphate + 2 H(+). It carries out the reaction L-glutamine + H2O = L-glutamate + NH4(+). The enzyme catalyses UTP + NH4(+) + ATP = CTP + ADP + phosphate + 2 H(+). The protein operates within pyrimidine metabolism; CTP biosynthesis via de novo pathway; CTP from UDP: step 2/2. With respect to regulation, allosterically activated by GTP, when glutamine is the substrate; GTP has no effect on the reaction when ammonia is the substrate. The allosteric effector GTP functions by stabilizing the protein conformation that binds the tetrahedral intermediate(s) formed during glutamine hydrolysis. Inhibited by the product CTP, via allosteric rather than competitive inhibition. Functionally, catalyzes the ATP-dependent amination of UTP to CTP with either L-glutamine or ammonia as the source of nitrogen. Regulates intracellular CTP levels through interactions with the four ribonucleotide triphosphates. The polypeptide is CTP synthase (Cereibacter sphaeroides (strain ATCC 17023 / DSM 158 / JCM 6121 / CCUG 31486 / LMG 2827 / NBRC 12203 / NCIMB 8253 / ATH 2.4.1.) (Rhodobacter sphaeroides)).